The primary structure comprises 302 residues: Putative S-adenosyl-L-methionine-dependent methyltransferase MUL_2961 (302 aa).

S-adenosyl-L-methionine is bound by residues aspartate 128 and 157–158 (DL).

This sequence belongs to the UPF0677 family.

Its function is as follows. Exhibits S-adenosyl-L-methionine-dependent methyltransferase activity. This chain is Putative S-adenosyl-L-methionine-dependent methyltransferase MUL_2961, found in Mycobacterium ulcerans (strain Agy99).